A 523-amino-acid polypeptide reads, in one-letter code: Glutamate--cysteine ligase, chloroplastic (523 aa).

A disulfide bond links Cys187 and Cys407.

Belongs to the carboxylate-amine ligase family. Glutamate--cysteine ligase type 2 subfamily. Homodimer or monomer when oxidized or reduced, respectively. In terms of processing, the Cys-187-Cys-407 disulfide bridge is known to modulate the enzyme activity according to the redox status. The oxidized form constitutes the active enzyme.

The protein localises to the plastid. It is found in the chloroplast. The enzyme catalyses L-cysteine + L-glutamate + ATP = gamma-L-glutamyl-L-cysteine + ADP + phosphate + H(+). Its pathway is sulfur metabolism; glutathione biosynthesis; glutathione from L-cysteine and L-glutamate: step 1/2. The sequence is that of Glutamate--cysteine ligase, chloroplastic (GSH1) from Solanum lycopersicum (Tomato).